The primary structure comprises 56 residues: UPF0391 membrane protein Bd1438 (56 aa).

The next 2 helical transmembrane spans lie at 4–24 (AAIA…SGVA) and 33–53 (ILLF…LVSG).

The protein belongs to the UPF0391 family.

It is found in the cell membrane. The sequence is that of UPF0391 membrane protein Bd1438 from Bdellovibrio bacteriovorus (strain ATCC 15356 / DSM 50701 / NCIMB 9529 / HD100).